Here is a 464-residue protein sequence, read N- to C-terminus: Asparagine--tRNA ligase (464 aa).

It belongs to the class-II aminoacyl-tRNA synthetase family. As to quaternary structure, homodimer.

The protein resides in the cytoplasm. It carries out the reaction tRNA(Asn) + L-asparagine + ATP = L-asparaginyl-tRNA(Asn) + AMP + diphosphate + H(+). The polypeptide is Asparagine--tRNA ligase (Clostridium botulinum (strain Alaska E43 / Type E3)).